The chain runs to 424 residues: Gamma-glutamyl phosphate reductase (424 aa).

This sequence belongs to the gamma-glutamyl phosphate reductase family.

It is found in the cytoplasm. The enzyme catalyses L-glutamate 5-semialdehyde + phosphate + NADP(+) = L-glutamyl 5-phosphate + NADPH + H(+). The protein operates within amino-acid biosynthesis; L-proline biosynthesis; L-glutamate 5-semialdehyde from L-glutamate: step 2/2. Catalyzes the NADPH-dependent reduction of L-glutamate 5-phosphate into L-glutamate 5-semialdehyde and phosphate. The product spontaneously undergoes cyclization to form 1-pyrroline-5-carboxylate. The polypeptide is Gamma-glutamyl phosphate reductase (Dehalococcoides mccartyi (strain CBDB1)).